The chain runs to 634 residues: DNA-directed RNA polymerase subunit gamma (634 aa).

Cys-74, Cys-76, Cys-89, and Cys-92 together coordinate Zn(2+). Mg(2+) contacts are provided by Asp-471, Asp-473, and Asp-475.

The protein belongs to the RNA polymerase beta' chain family. RpoC1 subfamily. As to quaternary structure, in cyanobacteria the RNAP catalytic core is composed of 2 alpha, 1 beta, 1 beta', 1 gamma and 1 omega subunit. When a sigma factor is associated with the core the holoenzyme is formed, which can initiate transcription. Mg(2+) serves as cofactor. Requires Zn(2+) as cofactor.

It carries out the reaction RNA(n) + a ribonucleoside 5'-triphosphate = RNA(n+1) + diphosphate. In terms of biological role, DNA-dependent RNA polymerase catalyzes the transcription of DNA into RNA using the four ribonucleoside triphosphates as substrates. The chain is DNA-directed RNA polymerase subunit gamma from Prochlorococcus marinus (strain MIT 9303).